Consider the following 384-residue polypeptide: Glycerol 3-phosphate oxidase (384 aa).

The N-terminal stretch at M1–S17 is a signal peptide. I14 contributes to the FAD binding site. Residue C18 is the site of N-palmitoyl cysteine attachment. The S-diacylglycerol cysteine moiety is linked to residue C18. Residues E33, T42–S43, and S47–V49 each bind FAD. Positions 47 and 51 each coordinate sn-glycerol 3-phosphate. H51 serves as the catalytic Proton acceptor. An FAD-binding site is contributed by V177. K258 and R320 together coordinate sn-glycerol 3-phosphate. M346–K347 serves as a coordination point for FAD. Residue S348 coordinates sn-glycerol 3-phosphate. Position 352 (T352) interacts with FAD.

Monomer. FAD is required as a cofactor.

The protein localises to the cytoplasm. The protein resides in the cell membrane. The catalysed reaction is sn-glycerol 3-phosphate + O2 = dihydroxyacetone phosphate + H2O2. It participates in polyol metabolism; glycerol degradation via glycerol kinase pathway; glycerone phosphate from sn-glycerol 3-phosphate (aerobic route): step 1/1. Catalyzes the oxidation of glycerol 3-phosphate to dihydroxyacetone phosphate (DHAP), with a reduction of O2 to H2O2. The formation of hydrogen peroxide by this enzyme is crucial for cytotoxic effects on host cells. Does not show any dehydrogenase activity with NAD(+). This Mycoplasma genitalium (strain ATCC 33530 / DSM 19775 / NCTC 10195 / G37) (Mycoplasmoides genitalium) protein is Glycerol 3-phosphate oxidase.